Here is a 420-residue protein sequence, read N- to C-terminus: Probable glucuronosyltransferase Os04g0398600 (420 aa).

Residues 1 to 4 (MGSR) are Cytoplasmic-facing. A helical; Signal-anchor for type II membrane protein transmembrane segment spans residues 5–25 (TVGWWLLAAAVVLAAAAADSG). The Lumenal portion of the chain corresponds to 26–420 (EAERAAEQHS…AGPVGDLKAW (395 aa)). N-linked (GlcNAc...) asparagine glycosylation is found at N147 and N408.

Belongs to the glycosyltransferase 47 family.

The protein resides in the golgi apparatus membrane. Functionally, involved in the synthesis of glucuronoxylan hemicellulose in secondary cell walls. This chain is Probable glucuronosyltransferase Os04g0398600, found in Oryza sativa subsp. japonica (Rice).